Consider the following 112-residue polypeptide: uncharacterized protein (112 aa).

In terms of domain architecture, HIT spans 5–112 (IFQKIIKGII…LLGGKKLNKI (108 aa)). Residues 98 to 102 (HLHLH) carry the Histidine triad motif motif.

This is an uncharacterized protein from Buchnera aphidicola subsp. Baizongia pistaciae (strain Bp).